The primary structure comprises 149 residues: Protegrin-4 (149 aa).

The signal sequence occupies residues 1–29 (METQRASLCLGRWSLWLLLLALVVPSASA). A propeptide spanning residues 30 to 130 (QALSYREAVL…DITCNEVQGV (101 aa)) is cleaved from the precursor. Positions 61–80 (DQPPKADEDPGTPKPVSFTV) are disordered. 4 disulfides stabilise this stretch: Cys-85/Cys-96, Cys-107/Cys-124, Cys-136/Cys-145, and Cys-138/Cys-143. Arg-148 is modified (arginine amide).

It belongs to the cathelicidin family.

It localises to the secreted. In terms of biological role, microbicidal activity. The chain is Protegrin-4 (NPG4) from Sus scrofa (Pig).